Consider the following 392-residue polypeptide: Esterase EstB (392 aa).

The active-site Acyl-ester intermediate is the S75.

This sequence belongs to the class-A beta-lactamase family.

It is found in the cytoplasm. With respect to regulation, strongly inhibited by eserin, NaF, HgCl2, SDS and Triton X-100. In terms of biological role, acts on short-chain (C4-C6) fatty acid esters and triglycerides, including tertiary alcohol esters. Activity on p-nitrophenyl esters is generally higher than on o-nitrophenyl esters. Lacks beta-lactamase activity; it hydrolyzes the ester bond of cephalosporin substrates but there is no opening of the beta-lactam ring observed. This is Esterase EstB (estB) from Burkholderia gladioli (Pseudomonas marginata).